The following is a 413-amino-acid chain: Aspartate aminotransferase, cytoplasmic (413 aa).

Residues G39, W141, and N195 each coordinate L-aspartate. At K259 the chain carries N6-(pyridoxal phosphate)lysine. An L-aspartate-binding site is contributed by R387.

This sequence belongs to the class-I pyridoxal-phosphate-dependent aminotransferase family. Homodimer. Pyridoxal 5'-phosphate serves as cofactor.

The protein localises to the cytoplasm. The enzyme catalyses L-aspartate + 2-oxoglutarate = oxaloacetate + L-glutamate. It carries out the reaction L-cysteine + 2-oxoglutarate = 2-oxo-3-sulfanylpropanoate + L-glutamate. It catalyses the reaction (2S)-2-aminobutanoate + 2-oxoglutarate = 2-oxobutanoate + L-glutamate. The catalysed reaction is 3-sulfino-L-alanine + 2-oxoglutarate = 3-sulfinopyruvate + L-glutamate. Functionally, biosynthesis of L-glutamate from L-aspartate or L-cysteine. Important regulator of levels of glutamate, the major excitatory neurotransmitter of the vertebrate central nervous system. Acts as a scavenger of glutamate in brain neuroprotection. The aspartate aminotransferase activity is involved in hepatic glucose synthesis during development and in adipocyte glyceroneogenesis. Using L-cysteine as substrate, regulates levels of mercaptopyruvate, an important source of hydrogen sulfide. Mercaptopyruvate is converted into H(2)S via the action of 3-mercaptopyruvate sulfurtransferase (3MST). Hydrogen sulfide is an important synaptic modulator and neuroprotectant in the brain. The polypeptide is Aspartate aminotransferase, cytoplasmic (Sus scrofa (Pig)).